The chain runs to 199 residues: NAD(P)H dehydrogenase (quinone) (199 aa).

Residues 4-190 (VLVLYYSTYG…AGARHQGELV (187 aa)) enclose the Flavodoxin-like domain. Residues 10-15 (STYGHL) and 78-80 (TRF) each bind FMN. Residue Tyr12 coordinates NAD(+). Trp98 serves as a coordination point for substrate. Residues 113-119 (STATQHG) and His134 each bind FMN.

Belongs to the WrbA family. It depends on FMN as a cofactor.

The enzyme catalyses a quinone + NADH + H(+) = a quinol + NAD(+). The catalysed reaction is a quinone + NADPH + H(+) = a quinol + NADP(+). This is NAD(P)H dehydrogenase (quinone) from Azorhizobium caulinodans (strain ATCC 43989 / DSM 5975 / JCM 20966 / LMG 6465 / NBRC 14845 / NCIMB 13405 / ORS 571).